The following is a 553-amino-acid chain: 2-succinyl-5-enolpyruvyl-6-hydroxy-3-cyclohexene-1-carboxylate synthase (553 aa).

This sequence belongs to the TPP enzyme family. MenD subfamily. Homodimer. Mg(2+) is required as a cofactor. It depends on Mn(2+) as a cofactor. Thiamine diphosphate serves as cofactor.

It carries out the reaction isochorismate + 2-oxoglutarate + H(+) = 5-enolpyruvoyl-6-hydroxy-2-succinyl-cyclohex-3-ene-1-carboxylate + CO2. It participates in quinol/quinone metabolism; 1,4-dihydroxy-2-naphthoate biosynthesis; 1,4-dihydroxy-2-naphthoate from chorismate: step 2/7. It functions in the pathway quinol/quinone metabolism; menaquinone biosynthesis. Its function is as follows. Catalyzes the thiamine diphosphate-dependent decarboxylation of 2-oxoglutarate and the subsequent addition of the resulting succinic semialdehyde-thiamine pyrophosphate anion to isochorismate to yield 2-succinyl-5-enolpyruvyl-6-hydroxy-3-cyclohexene-1-carboxylate (SEPHCHC). The chain is 2-succinyl-5-enolpyruvyl-6-hydroxy-3-cyclohexene-1-carboxylate synthase from Thermobifida fusca (strain YX).